Reading from the N-terminus, the 236-residue chain is Small ribosomal subunit protein uS10m (236 aa).

A mitochondrion-targeting transit peptide spans 1–24 (MMRQSIRPLRAFSSEVSWIARRTQ). The disordered stretch occupies residues 29-49 (KPGDLVPNKPEPSKNEQEPRF). Residues 39-49 (EPSKNEQEPRF) are compositionally biased toward basic and acidic residues.

This sequence belongs to the universal ribosomal protein uS10 family. In terms of assembly, part of the mitochondrial small ribosomal subunit.

It is found in the mitochondrion. Involved in mitochondrial genome encoded proteins translation. Involved in the binding of tRNA to the ribosomes. The chain is Small ribosomal subunit protein uS10m (RSM10) from Gibberella zeae (strain ATCC MYA-4620 / CBS 123657 / FGSC 9075 / NRRL 31084 / PH-1) (Wheat head blight fungus).